The primary structure comprises 385 residues: Meiosis-specific protein MEI4 (385 aa).

Residues 1–126 (MDVQKWYLRT…LSQHFVESCT (126 aa)) form an interaction with REC114 region. Positions 86–110 (AQEPKSSESTLTSMEDSGCDLSNEQ) are disordered. Residues 92-107 (SESTLTSMEDSGCDLS) are compositionally biased toward polar residues.

The protein belongs to the MEI4L family. As to quaternary structure, part of the MCD recombinosome complex, at least composed of IHO1, REC114 and MEI4. Forms a complex with REC114; the interaction is required for MEI4 stability. Interacts (via N-terminal domain) with REC114 (via C-terminal domain). Interacts with IHO1.

It localises to the chromosome. Required for DNA double-strand breaks (DSBs) formation in unsynapsed regions during meiotic recombination. Probably acts by forming a complex with IHO1 and REC114, which activates DSBs formation in unsynapsed regions, an essential step to ensure completion of synapsis. The protein is Meiosis-specific protein MEI4 of Homo sapiens (Human).